Here is a 203-residue protein sequence, read N- to C-terminus: Holliday junction branch migration complex subunit RuvA (203 aa).

The domain I stretch occupies residues 1–64; that stretch reads MIGRLRGIII…EDAQLLYGFN (64 aa). The tract at residues 65–142 is domain II; that stretch reads NKQERTLFKE…KGLHGDLFTP (78 aa). Residues 143 to 154 form a flexible linker region; that stretch reads AADLVLTSPASP. A domain III region spans residues 155–203; sequence ATDDAEQEAVAALVALGYKPQEASRMVSKIARPDASSETLIREALHAAL.

The protein belongs to the RuvA family. As to quaternary structure, homotetramer. Forms an RuvA(8)-RuvB(12)-Holliday junction (HJ) complex. HJ DNA is sandwiched between 2 RuvA tetramers; dsDNA enters through RuvA and exits via RuvB. An RuvB hexamer assembles on each DNA strand where it exits the tetramer. Each RuvB hexamer is contacted by two RuvA subunits (via domain III) on 2 adjacent RuvB subunits; this complex drives branch migration. In the full resolvosome a probable DNA-RuvA(4)-RuvB(12)-RuvC(2) complex forms which resolves the HJ.

Its subcellular location is the cytoplasm. Functionally, the RuvA-RuvB-RuvC complex processes Holliday junction (HJ) DNA during genetic recombination and DNA repair, while the RuvA-RuvB complex plays an important role in the rescue of blocked DNA replication forks via replication fork reversal (RFR). RuvA specifically binds to HJ cruciform DNA, conferring on it an open structure. The RuvB hexamer acts as an ATP-dependent pump, pulling dsDNA into and through the RuvAB complex. HJ branch migration allows RuvC to scan DNA until it finds its consensus sequence, where it cleaves and resolves the cruciform DNA. This chain is Holliday junction branch migration complex subunit RuvA, found in Escherichia fergusonii (strain ATCC 35469 / DSM 13698 / CCUG 18766 / IAM 14443 / JCM 21226 / LMG 7866 / NBRC 102419 / NCTC 12128 / CDC 0568-73).